A 304-amino-acid chain; its full sequence is N-acetylmuramic acid 6-phosphate etherase (304 aa).

A Phosphoserine modification is found at serine 2. Residues alanine 59 to lysine 222 enclose the SIS domain. Glutamate 87 serves as the catalytic Proton donor. Residue glutamate 118 is part of the active site.

It belongs to the GCKR-like family. MurNAc-6-P etherase subfamily. As to quaternary structure, homodimer.

It catalyses the reaction N-acetyl-D-muramate 6-phosphate + H2O = N-acetyl-D-glucosamine 6-phosphate + (R)-lactate. It participates in amino-sugar metabolism; N-acetylmuramate degradation. Functionally, specifically catalyzes the cleavage of the D-lactyl ether substituent of MurNAc 6-phosphate, producing GlcNAc 6-phosphate and D-lactate. The sequence is that of N-acetylmuramic acid 6-phosphate etherase from Bacillus subtilis (strain 168).